Here is a 769-residue protein sequence, read N- to C-terminus: P-selectin (769 aa).

The signal sequence occupies residues 1-32 (MASCPKAIWSWRFQRVVFRSVQLLCFSILIFE). The Extracellular segment spans residues 33-717 (LMTQKEVSAW…QEALTYIGGA (685 aa)). 2 N-linked (GlcNAc...) asparagine glycosylation sites follow: Asn-54 and Asn-80. Residues 58–158 (AFCQKYYTDL…PCGKRKRALC (101 aa)) form the C-type lectin domain. Cystine bridges form between Cys-60-Cys-158, Cys-131-Cys-150, Cys-163-Cys-174, Cys-168-Cys-183, Cys-185-Cys-194, Cys-200-Cys-244, Cys-230-Cys-257, Cys-262-Cys-306, Cys-292-Cys-319, Cys-324-Cys-368, Cys-354-Cys-381, Cys-386-Cys-430, Cys-416-Cys-443, Cys-448-Cys-492, Cys-478-Cys-505, Cys-510-Cys-554, Cys-540-Cys-567, Cys-581-Cys-625, Cys-611-Cys-638, Cys-643-Cys-687, and Cys-673-Cys-700. Residues Glu-121, Asn-123, and Asn-124 each contribute to the Ca(2+) site. Position 123 (Asn-123) interacts with a carbohydrate. A carbohydrate-binding residues include Glu-133 and Asn-146. The Ca(2+) site is built by Asn-146 and Asp-147. Residues 159 to 195 (YRASCQDMSCSKQGECIETIGNYTCSCYPGFYGPECE) form the EGF-like domain. An N-linked (GlcNAc...) asparagine glycan is attached at Asn-180. Sushi domains lie at 198 to 259 (RECG…QCVA), 260 to 321 (VQCP…VCKA), 322 to 383 (IACE…VCQA), 384 to 445 (LQCQ…ECQA), 446 to 507 (VTCA…TCEA), 508 to 569 (SKCP…SCKV), 579 to 640 (LRCP…TCRA), and 641 to 702 (VKCS…TCQA). 2 N-linked (GlcNAc...) asparagine glycosylation sites follow: Asn-212 and Asn-219. Asn-347 carries an N-linked (GlcNAc...) asparagine glycan. Residue Asn-398 is glycosylated (N-linked (GlcNAc...) asparagine). The N-linked (GlcNAc...) asparagine glycan is linked to Asn-604. N-linked (GlcNAc...) asparagine glycosylation is found at Asn-655, Asn-662, and Asn-680. Residues 718 to 734 (AAGTTGLVTSSILLALL) traverse the membrane as a helical segment. Residues 735–769 (RRRRRQKDDGKSPLNPQSHLGTYGVFTNAAFDPSP) lie on the Cytoplasmic side of the membrane. The interval 740 to 769 (QKDDGKSPLNPQSHLGTYGVFTNAAFDPSP) is disordered. The short motif at 757–760 (YGVF) is the Endocytosis signal element. The segment at 760 to 769 (FTNAAFDPSP) is interaction with SNX17.

Belongs to the selectin/LECAM family. Interacts with SNX17. Interacts with SELPLG/PSGL1 and PODXL2 and mediates neutrophil adhesion and leukocyte rolling. This interaction requires the sialyl-Lewis X epitope of SELPLG and PODXL2, and specific tyrosine sulfation on SELPLG. Interacts (via C-type lectin domain) with alpha-IIb/beta3 integrin ITGA2B:ITGB3 and alpha-V/beta-3 integrin ITGAV:ITGB3. Interacts with alpha5/beta1 integrin ITGA5:ITGB1 and alpha4/beta1 integrin ITGA4:ITGB.

Its subcellular location is the cell membrane. In terms of biological role, ca(2+)-dependent receptor for myeloid cells that binds to carbohydrates on neutrophils and monocytes. Mediates the interaction of activated endothelial cells or platelets with leukocytes. The ligand recognized is sialyl-Lewis X. Mediates rapid rolling of leukocyte rolling over vascular surfaces during the initial steps in inflammation through interaction with SELPLG. Mediates cell-cell interactions and cell adhesion via the interaction with integrin alpha-IIb/beta3 (ITGA2B:ITGB3) and integrin alpha-V/beta-3 (ITGAV:ITGB3). The polypeptide is P-selectin (SELP) (Ovis aries (Sheep)).